The following is a 666-amino-acid chain: DNA mismatch repair protein MutL (666 aa).

Belongs to the DNA mismatch repair MutL/HexB family.

This protein is involved in the repair of mismatches in DNA. It is required for dam-dependent methyl-directed DNA mismatch repair. May act as a 'molecular matchmaker', a protein that promotes the formation of a stable complex between two or more DNA-binding proteins in an ATP-dependent manner without itself being part of a final effector complex. The polypeptide is DNA mismatch repair protein MutL (Clostridium botulinum (strain Okra / Type B1)).